A 234-amino-acid polypeptide reads, in one-letter code: MKKILIVDDEKPISDIIKFNMTKEGYEVVTAFNGREALEQFEAEQPDIIILDLMLPEIDGLEVAKTIRKTSSVPILMLSAKDSEFDKVIGLELGADDYVTKPFSNRELQARVKALLRRSQPMPVDGQEADSKPQPIQIGDLEIVPDAYVAKKYGEELDLTHREFELLYHLASHTGQVITREHLLETVWGYDYFGDVRTVDVTVRRLREKIEDTPSRPEYILTRRGVGYYMRNNA.

In terms of domain architecture, Response regulatory spans 3 to 116 (KILIVDDEKP…ELQARVKALL (114 aa)). The residue at position 52 (Asp-52) is a 4-aspartylphosphate. Positions 133–232 (PQPIQIGDLE…RRGVGYYMRN (100 aa)) form a DNA-binding region, ompR/PhoB-type.

In terms of assembly, monomer. Homodimer. Phosphorylated by WalK; can also be dephosphorylated by WalK.

The protein resides in the cytoplasm. Functionally, member of the two-component regulatory system WalK/WalR that regulates genes involved in cell wall metabolism. Binds to the promoter region of the transcription factor fabT gene in the fabTH-acp operon in vitro. Inhibits transcription of fabT, probably acting in an unphosphorylated form, thereby playing a role in the regulation of fatty acid biosynthesis. Essential for normal growth in vitro. Required for maintaining normal cellular morphology, acting, at least in part, by regulating peptidoglycan hydrolase pcsB. Involved in maintaining expression of WalRK regulon genes in exponentially growing cells. This Streptococcus pneumoniae serotype 2 (strain D39 / NCTC 7466) protein is Transcriptional regulatory protein WalR.